Here is a 37-residue protein sequence, read N- to C-terminus: Cytochrome b6-f complex subunit 5 (37 aa).

The helical transmembrane segment at 5–25 (LLSGIVLGLIVVTLSGLFYAA) threads the bilayer.

This sequence belongs to the PetG family. The 4 large subunits of the cytochrome b6-f complex are cytochrome b6, subunit IV (17 kDa polypeptide, PetD), cytochrome f and the Rieske protein, while the 4 small subunits are PetG, PetL, PetM and PetN. The complex functions as a dimer.

It is found in the cellular thylakoid membrane. Functionally, component of the cytochrome b6-f complex, which mediates electron transfer between photosystem II (PSII) and photosystem I (PSI), cyclic electron flow around PSI, and state transitions. PetG is required for either the stability or assembly of the cytochrome b6-f complex. The sequence is that of Cytochrome b6-f complex subunit 5 from Trichormus variabilis (strain ATCC 29413 / PCC 7937) (Anabaena variabilis).